The chain runs to 406 residues: Phosphatidylinositol 5-phosphate 4-kinase type-2 alpha (406 aa).

An N-acetylalanine modification is found at Ala-2. Residue Thr-3 is modified to Phosphothreonine. Ser-14 is modified (phosphoserine). A PIPK domain is found at 33-405; that stretch reads ASDPLLSVLM…RFLDFIGHIL (373 aa). Residues 59–65 are required for interaction with PIP5K1A; it reads VMLMPDD. An N6-acetyllysine mark is found at Lys-89 and Lys-145. The disordered stretch occupies residues 287–328; it reads EQEEVECEENEGEEEGESDGAHPIGTPPDSPGNTLNSSPPLA. Acidic residues predominate over residues 289–304; that stretch reads EEVECEENEGEEEGES.

Homodimer. Interacts with PIP4K2B; the interaction may regulate localization to the nucleus. Probably interacts with PIP5K1A; the interaction inhibits PIP5K1A kinase activity. In terms of processing, phosphorylated in tyrosines. Phosphorylation is induced by light and increases kinase activity.

The protein resides in the cell membrane. The protein localises to the nucleus. It localises to the lysosome. Its subcellular location is the cytoplasm. It is found in the photoreceptor inner segment. The protein resides in the cell projection. The protein localises to the cilium. It localises to the photoreceptor outer segment. It carries out the reaction a 1,2-diacyl-sn-glycero-3-phospho-(1D-myo-inositol-5-phosphate) + ATP = a 1,2-diacyl-sn-glycero-3-phospho-(1D-myo-inositol-4,5-bisphosphate) + ADP + H(+). The catalysed reaction is 1,2-dihexadecanoyl-sn-glycero-3-phospho-(1D-myo-inositol-5-phosphate) + ATP = 1,2-dihexadecanoyl-sn-glycero-3-phospho-(1D-myo-inositol-4,5-bisphosphate) + ADP + H(+). It catalyses the reaction 1,2-dihexadecanoyl-sn-glycero-3-phospho-(1D-myo-inositol-5-phosphate) + GTP = 1,2-dihexadecanoyl-sn-glycero-3-phospho-(1D-myo-inositol-4,5-bisphosphate) + GDP + H(+). With respect to regulation, in rod outer segments, activated by light. Its function is as follows. Catalyzes the phosphorylation of phosphatidylinositol 5-phosphate (PtdIns5P) on the fourth hydroxyl of the myo-inositol ring, to form phosphatidylinositol 4,5-bisphosphate (PtdIns(4,5)P2). Has both ATP- and GTP-dependent kinase activities. May exert its function by regulating the levels of PtdIns5P, which functions in the cytosol by increasing AKT activity and in the nucleus signals through ING2. May regulate the pool of cytosolic PtdIns5P in response to the activation of tyrosine phosphorylation. Required for lysosome-peroxisome membrane contacts and intracellular cholesterol transport through modulating peroxisomal PtdIns(4,5)P2 level. In collaboration with PIP4K2B, has a role in mediating autophagy in times of nutrient stress. Required for autophagosome-lysosome fusion and the regulation of cellular lipid metabolism. Negatively regulates insulin signaling through a catalytic-independent mechanism. PIP4Ks interact with PIP5Ks and suppress PIP5K-mediated PtdIns(4,5)P2 synthesis and insulin-dependent conversion to PtdIns(3,4,5)P3. May be involved in thrombopoiesis, and the terminal maturation of megakaryocytes and regulation of their size. This Rattus norvegicus (Rat) protein is Phosphatidylinositol 5-phosphate 4-kinase type-2 alpha.